The sequence spans 989 residues: Voltage-gated delayed rectifier potassium channel KCNH1 (989 aa).

Residues 1–220 (MTMAGGRRGL…LHYCVFKTTW (220 aa)) lie on the Cytoplasmic side of the membrane. Residues 14–94 (QNTFLENIVR…QTFENYEMNS (81 aa)) enclose the PAS domain. One can recognise a PAC domain in the interval 93-145 (NSFEILMYKKNRTPVWFFVKIAPIRNEQDKVVLFLCTFSDITAFKQPIEDDSC). The segment at 151-162 (FARLTRALTSSR) is required for phosphatidylinositol bisphosphate binding. A helical transmembrane segment spans residues 221–241 (DWIILILTFYTAILVPYNVSF). At 242–248 (KTRQNNV) the chain is on the extracellular side. A helical transmembrane segment spans residues 249-269 (AWLVVDSIVDVIFLVDIVLNF). Over 270 to 290 (HTTFVGPAGEVISDPKLIRMN) the chain is Cytoplasmic. Residues 291–309 (YLKTWFVIDLLSCLPYDVI) form a helical membrane-spanning segment. The Extracellular portion of the chain corresponds to 310 to 345 (NAFENVDEVSAFMGDPGKIGFADQIPPPLEGRESQG). A helical; Voltage-sensor transmembrane segment spans residues 346–368 (ISSLFSSLKVVRLLRLGRVARKL). The Cytoplasmic segment spans residues 369–377 (DHYIEYGAA). The helical transmembrane segment at 378-399 (VLVLLVCVFGLAAHWMACIWYS) threads the bilayer. At 400–448 (IGDYEIFDEDTKTIRNNSWLYQLALDIGTPYQFNGSGSGKWEGGPSKNS) the chain is on the extracellular side. N415 and N433 each carry an N-linked (GlcNAc...) asparagine glycan. The segment at residues 449–470 (VYISSLYFTMTSLTSVGFGNIA) is an intramembrane region (pore-forming). A Selectivity filter motif is present at residues 463–468 (SVGFGN). Topologically, residues 471-477 (PSTDIEK) are extracellular. The chain crosses the membrane as a helical span at residues 478–498 (IFAVAIMMIGSLLYATIFGNV). Over 499–989 (TTIFQQMYAN…ESDRDIFGAS (491 aa)) the chain is Cytoplasmic. The tract at residues 673–770 (KRDALQKVLE…LDDLDVEKGN (98 aa)) is calmodulin-binding. An interaction with cyclic nucleotide-binding pocket region spans residues 699–701 (YNL). 2 stretches are compositionally biased toward basic and acidic residues: residues 857-879 (ESME…KTDS) and 887-901 (SDLR…RSPQ). 2 disordered regions span residues 857-905 (ESME…DRSP) and 961-989 (RGSA…FGAS). Positions 924–964 (ATVLEVKYELKEDIKALNAKMTSIEKQLSEILRILMSRGSA) are CAD (involved in subunit assembly). The segment covering 962–979 (GSAQSPQETGEISRPQSP) has biased composition (polar residues). S974, S978, and S981 each carry phosphoserine. Residues 980–989 (ESDRDIFGAS) are compositionally biased toward basic and acidic residues.

The protein belongs to the potassium channel family. H (Eag) (TC 1.A.1.20) subfamily. Kv10.1/KCNH1 sub-subfamily. In terms of assembly, homomultimer. The potassium channel is composed of a homo- or heterotetrameric complex of pore-forming alpha subunits that can associate with modulating beta subunits. Heteromultimer with KCNH5/EAG2. Interacts with ALG10B. Interacts with RABEP1. Interacts (via C-terminus) with CTTN. Interacts (via C-terminal cytoplasmic region) with Ca(2+)-bound calmodulin. Post-translationally, channel activity is regulated via tyrosine phosphorylation/dephosphorylation by SRC and PTPN6. In terms of tissue distribution, detected in brain (at protein level). Highly expressed in olfactory bulb. Detected in brain cortex, hippocampus, brain stem, striatum, thalamus, hypothalamus and spinal cord.

It is found in the cell membrane. The protein localises to the nucleus inner membrane. Its subcellular location is the cell projection. It localises to the dendrite. The protein resides in the axon. It is found in the presynaptic cell membrane. The protein localises to the perikaryon. Its subcellular location is the postsynaptic density membrane. It localises to the early endosome membrane. The enzyme catalyses K(+)(in) = K(+)(out). Channel activity is inhibited by interaction with Ca(2+)-bound calmodulin. Interaction of a single pore-forming alpha subunit with a calmodulin chain is sufficient to promote channel closure. Channel activity is not regulated by cyclic nucleotides. Channel activity is inhibited by binding intracellular phosphatidylinositol-3,5-bisphosphate and phosphatidylinositol-4,5-bisphosphate (PIP2), but is not inhibited by phosphatidylinositol 4-phosphate. In terms of biological role, pore-forming (alpha) subunit of a voltage-gated delayed rectifier potassium channel that mediates outward-rectifying potassium currents which, on depolarization, reaches a steady-state level and do not inactivate. The activation kinetics depend on the prepulse potential and external divalent cation concentration. With negative prepulses, the current activation is delayed and slowed down several fold, whereas more positive prepulses speed up activation. The time course of activation is biphasic with a fast and a slowly activating current component. Activates at more positive membrane potentials and exhibit a steeper activation curve. Channel properties are modulated by subunit assembly. Mediates IK(NI) current in myoblasts. Involved in the regulation of cell proliferation and differentiation, in particular adipogenic and osteogenic differentiation in bone marrow-derived mesenchymal stem cells (MSCs). The sequence is that of Voltage-gated delayed rectifier potassium channel KCNH1 from Mus musculus (Mouse).